Consider the following 354-residue polypeptide: DnaJ homolog shv (354 aa).

The N-terminal stretch at methionine 1–alanine 22 is a signal peptide. A J domain is found at aspartate 25–glycine 90. Residues asparagine 260 and asparagine 312 are each glycosylated (N-linked (GlcNAc...) asparagine).

In terms of tissue distribution, in the testes, detected at low levels in somatic hub cells, cyst stem cells and the apical tip (at protein level). Levels in the testes decrease with age (at protein level). Expressed at low levels in hub cells, cyst stem cells and germline stem cells, and at high levels in spermatocytes and cyst cells.

The protein resides in the nucleus. Its subcellular location is the cell membrane. It localises to the secreted. Functionally, maintains stem cell niche architecture in the testes. Activates an extracellular integrin beta-PS pathway which regulates DE-cadherin (shg) levels in somatic hub cells, and is essential for maintaining the number of germline stem cells and the structure and localization of hub cells. This Drosophila melanogaster (Fruit fly) protein is DnaJ homolog shv.